Reading from the N-terminus, the 172-residue chain is Shikimate kinase (172 aa).

Position 14–19 (14–19 (GAGKTT)) interacts with ATP. Thr18 is a Mg(2+) binding site. Substrate is bound by residues Asp36, Arg60, and Gly82. Arg119 lines the ATP pocket. Residue Arg137 coordinates substrate.

The protein belongs to the shikimate kinase family. As to quaternary structure, monomer. Mg(2+) is required as a cofactor.

It localises to the cytoplasm. The enzyme catalyses shikimate + ATP = 3-phosphoshikimate + ADP + H(+). It participates in metabolic intermediate biosynthesis; chorismate biosynthesis; chorismate from D-erythrose 4-phosphate and phosphoenolpyruvate: step 5/7. Its function is as follows. Catalyzes the specific phosphorylation of the 3-hydroxyl group of shikimic acid using ATP as a cosubstrate. In Thermobifida fusca (strain YX), this protein is Shikimate kinase.